A 369-amino-acid chain; its full sequence is Capsid protein (369 aa).

Its subcellular location is the host nucleus. The protein resides in the virion. Functionally, self-assembles to form the virion icosahedral capsid. The sequence is that of Capsid protein from Avon-Heathcote Estuary associated kieseladnavirus (AHEaBV).